Reading from the N-terminus, the 135-residue chain is Large ribosomal subunit protein mL41A (135 aa).

Residues 1 to 13 (MGLISKIARGLVR) constitute a mitochondrion transit peptide.

Belongs to the mitochondrion-specific ribosomal protein mL41 family. As to quaternary structure, component of the mitochondrial ribosome large subunit (39S) which comprises a 16S rRNA and about 50 distinct proteins.

The protein resides in the mitochondrion. Functionally, component of the mitochondrial ribosome large subunit. Also involved in apoptosis and cell cycle. The chain is Large ribosomal subunit protein mL41A (mrpl41-a) from Xenopus laevis (African clawed frog).